The following is a 557-amino-acid chain: Potassium-transporting ATPase potassium-binding subunit (557 aa).

12 consecutive transmembrane segments (helical) span residues 5 to 25 (GFLL…PLGS), 63 to 83 (LSAI…MLLG), 132 to 152 (GLTV…FALI), 170 to 190 (LLRI…LFFI), 253 to 273 (FVQM…FGEV), 283 to 303 (LLWA…WAEV), 329 to 349 (VLVS…AVIA), 356 to 376 (ALGG…FGGV), 379 to 399 (GLYG…LMIG), 416 to 436 (LTAL…ALAM), 484 to 504 (LLAL…MAIA), and 526 to 546 (LFVG…FIPA).

The protein belongs to the KdpA family. As to quaternary structure, the system is composed of three essential subunits: KdpA, KdpB and KdpC.

The protein localises to the cell inner membrane. Its function is as follows. Part of the high-affinity ATP-driven potassium transport (or Kdp) system, which catalyzes the hydrolysis of ATP coupled with the electrogenic transport of potassium into the cytoplasm. This subunit binds the periplasmic potassium ions and delivers the ions to the membrane domain of KdpB through an intramembrane tunnel. The protein is Potassium-transporting ATPase potassium-binding subunit of Escherichia coli (strain UTI89 / UPEC).